Consider the following 126-residue polypeptide: Histone H2B 3 (126 aa).

The segment covering 1–12 has biased composition (low complexity); that stretch reads MPEPAKSAPAPK. The tract at residues 1 to 34 is disordered; that stretch reads MPEPAKSAPAPKKGSKKAVTKTQKKGDKKRRKTR. 2 positions are modified to N6-acetyllysine: K6 and K13. Residues 13-34 show a composition bias toward basic residues; that stretch reads KGSKKAVTKTQKKGDKKRRKTR. S15 bears the Phosphoserine mark. An N6-acetyllysine mark is found at K16 and K21. The O-linked (GlcNAc) serine glycan is linked to S113. Residue K121 forms a Glycyl lysine isopeptide (Lys-Gly) (interchain with G-Cter in ubiquitin) linkage.

It belongs to the histone H2B family. In terms of assembly, the nucleosome is a histone octamer containing two molecules each of H2A, H2B, H3 and H4 assembled in one H3-H4 heterotetramer and two H2A-H2B heterodimers. The octamer wraps approximately 147 bp of DNA. Monoubiquitination of Lys-121 by the BRE1 gives a specific tag for epigenetic transcriptional activation and is also prerequisite for histone H3 'Lys-4' and 'Lys-79' methylation. In terms of processing, phosphorylated on Ser-15 during apoptosis; which facilitates apoptotic chromatin condensation. Post-translationally, glcNAcylation at Ser-113 promotes monoubiquitination of Lys-121. It fluctuates in response to extracellular glucose, and associates with transcribed genes.

It localises to the nucleus. The protein resides in the chromosome. Functionally, core component of nucleosome. Nucleosomes wrap and compact DNA into chromatin, limiting DNA accessibility to the cellular machineries which require DNA as a template. Histones thereby play a central role in transcription regulation, DNA repair, DNA replication and chromosomal stability. DNA accessibility is regulated via a complex set of post-translational modifications of histones, also called histone code, and nucleosome remodeling. This chain is Histone H2B 3 (hist2h2l), found in Danio rerio (Zebrafish).